We begin with the raw amino-acid sequence, 439 residues long: Homeobox protein ceh-32 (439 aa).

A DNA-binding region (homeobox) is located at residues 183–243 (WDGEQKTHCF…KNRRQRDRAA (61 aa)). Disordered regions lie at residues 253-293 (GVEL…SHIP), 344-365 (EEEN…KKRS), and 379-439 (VSPS…SQSE). Composition is skewed to acidic residues over residues 264–274 (SDSDDDFEDSM) and 344–358 (EEEN…EADI). The segment covering 379–392 (VSPSQCSPCSNESL) has biased composition (polar residues). Residues 398 to 428 (VKTEEVKKEDDEAAEEDSRSVKSETSEDPKH) are compositionally biased toward basic and acidic residues.

The protein belongs to the SIX/Sine oculis homeobox family. As to quaternary structure, interacts with gmn-1. Expressed in the posterior gonad. Expressed in some cells in the head that are probably neurons. Expressed in the dorsal and ventral neuron RMD pair and the inner labial neuron class IL1. Not expressed in BAG neurons.

Its subcellular location is the nucleus. Transcription factor which binds a motif with the core sequence 5'-GTATCA-3'. Plays a role in head morphogenesis. Involved in embryonic development. Required for cell specification of the RIA interneurons. May cooperate with the transcription factor vab-3 and phosphatase eya-1 to repress transcription factor ets-5 expression in non BAG neuronal cells. This Caenorhabditis elegans protein is Homeobox protein ceh-32.